The sequence spans 287 residues: 4-hydroxybenzoate octaprenyltransferase (287 aa).

9 consecutive transmembrane segments (helical) span residues isoleucine 22–tryptophan 42, leucine 45–isoleucine 65, alanine 95–tryptophan 115, serine 116–arginine 136, leucine 140–alanine 160, glycine 162–tyrosine 182, isoleucine 214–phenylalanine 234, proline 237–valine 257, and cysteine 264–isoleucine 284.

It belongs to the UbiA prenyltransferase family. The cofactor is Mg(2+).

It is found in the cell inner membrane. It catalyses the reaction all-trans-octaprenyl diphosphate + 4-hydroxybenzoate = 4-hydroxy-3-(all-trans-octaprenyl)benzoate + diphosphate. Its pathway is cofactor biosynthesis; ubiquinone biosynthesis. Catalyzes the prenylation of para-hydroxybenzoate (PHB) with an all-trans polyprenyl group. Mediates the second step in the final reaction sequence of ubiquinone-8 (UQ-8) biosynthesis, which is the condensation of the polyisoprenoid side chain with PHB, generating the first membrane-bound Q intermediate 3-octaprenyl-4-hydroxybenzoate. This is 4-hydroxybenzoate octaprenyltransferase from Colwellia psychrerythraea (strain 34H / ATCC BAA-681) (Vibrio psychroerythus).